The following is a 266-amino-acid chain: Large ribosomal subunit protein uL2m (266 aa).

This sequence belongs to the universal ribosomal protein uL2 family.

It is found in the mitochondrion. The sequence is that of Large ribosomal subunit protein uL2m (mrpl2) from Dictyostelium discoideum (Social amoeba).